Reading from the N-terminus, the 516-residue chain is uncharacterized protein (516 aa).

PFTB repeat units follow at residues 45–86 (RQDA…QRAD) and 401–443 (DERA…DGSE).

This is an uncharacterized protein from Sinorhizobium fredii (strain NBRC 101917 / NGR234).